The following is a 234-amino-acid chain: Phosphoribosylaminoimidazole-succinocarboxamide synthase (234 aa).

The protein belongs to the SAICAR synthetase family.

The catalysed reaction is 5-amino-1-(5-phospho-D-ribosyl)imidazole-4-carboxylate + L-aspartate + ATP = (2S)-2-[5-amino-1-(5-phospho-beta-D-ribosyl)imidazole-4-carboxamido]succinate + ADP + phosphate + 2 H(+). Its pathway is purine metabolism; IMP biosynthesis via de novo pathway; 5-amino-1-(5-phospho-D-ribosyl)imidazole-4-carboxamide from 5-amino-1-(5-phospho-D-ribosyl)imidazole-4-carboxylate: step 1/2. The polypeptide is Phosphoribosylaminoimidazole-succinocarboxamide synthase (Sulfurisphaera tokodaii (strain DSM 16993 / JCM 10545 / NBRC 100140 / 7) (Sulfolobus tokodaii)).